Reading from the N-terminus, the 259-residue chain is uncharacterized protein (259 aa).

The region spanning 110–259 (QMGHPLTAWG…VHTVFHYFLT (150 aa)) is the N-acetyltransferase domain.

Functionally, may be involved in maturation of the outermost layer of the spore. This is an uncharacterized protein from Bacillus subtilis (strain 168).